A 327-amino-acid polypeptide reads, in one-letter code: Interleukin-12 subunit beta (327 aa).

The first 22 residues, 1–22, serve as a signal peptide directing secretion; the sequence is MCLQQLVISWVSLVWLASPLLA. Residues 23–106 enclose the Ig-like C2-type domain; that stretch reads IWELEKNVYV…LSQMLLLLHK (84 aa). The cysteines at positions 50 and 90 are disulfide-linked. Residues Asn-134 and Asn-152 are each glycosylated (N-linked (GlcNAc...) asparagine). Residues 237 to 327 enclose the Fibronectin type-III domain; it reads PPKNLKMKPS…WSEWATMSCP (91 aa).

The protein belongs to the IL-12B family. As to quaternary structure, heterodimer with IL12A; disulfide-linked. The heterodimer is known as interleukin IL-12. Heterodimer with IL23A; disulfide-linked. The heterodimer is known as interleukin IL-23. Also secreted as a monomer. Interacts with NBR1; this interaction promotes IL-12 secretion.

It localises to the secreted. Its function is as follows. Cytokine that can act as a growth factor for activated T and NK cells, enhance the lytic activity of NK/lymphokine-activated killer cells, and stimulate the production of IFN-gamma by resting PBMC. In terms of biological role, associates with IL23A to form the IL-23 interleukin, a heterodimeric cytokine which functions in innate and adaptive immunity. IL-23 may constitute with IL-17 an acute response to infection in peripheral tissues. IL-23 binds to a heterodimeric receptor complex composed of IL12RB1 and IL23R, activates the Jak-Stat signaling cascade, stimulates memory rather than naive T-cells and promotes production of pro-inflammatory cytokines. IL-23 induces autoimmune inflammation and thus may be responsible for autoimmune inflammatory diseases and may be important for tumorigenesis. The sequence is that of Interleukin-12 subunit beta (IL12B) from Marmota monax (Woodchuck).